Reading from the N-terminus, the 283-residue chain is Glutamate racemase (283 aa).

Residues D7–S8 and Y39–G40 each bind substrate. C70 acts as the Proton donor/acceptor in catalysis. Substrate is bound at residue N71–T72. C206 serves as the catalytic Proton donor/acceptor. A substrate-binding site is contributed by T207–H208.

It belongs to the aspartate/glutamate racemases family.

The catalysed reaction is L-glutamate = D-glutamate. Its pathway is cell wall biogenesis; peptidoglycan biosynthesis. Its function is as follows. Provides the (R)-glutamate required for cell wall biosynthesis. The protein is Glutamate racemase of Phenylobacterium zucineum (strain HLK1).